Here is a 605-residue protein sequence, read N- to C-terminus: Progranulin (605 aa).

Positions 1 to 17 are cleaved as a signal peptide; sequence MWTLVGWTILVAGLVAG. 2 disulfide bridges follow: cysteine 126/cysteine 139 and cysteine 133/cysteine 149. Asparagine 197 carries N-linked (GlcNAc...) asparagine glycosylation. Cystine bridges form between cysteine 297–cysteine 309, cysteine 303–cysteine 319, cysteine 310–cysteine 327, cysteine 320–cysteine 334, cysteine 328–cysteine 341, and cysteine 335–cysteine 348. A disordered region spans residues 359–386; it reads QKTPAQPSRPSQPSPPGPPGPPSPPGPL. Positions 368-385 are enriched in pro residues; the sequence is PSQPSPPGPPGPPSPPGP. 2 disulfide bridges follow: cysteine 392–cysteine 404 and cysteine 398–cysteine 414.

This sequence belongs to the granulin family. In terms of assembly, progranulin is secreted as a homodimer. Interacts with SLPI; interaction protects progranulin from proteolysis. Interacts (via region corresponding to granulin-7 peptide) with CTSD; stabilizes CTSD and increases its proteolytic activity. Interacts (via region corresponding to granulin-7 peptide) with SORT1; this interaction mediates endocytosis and lysosome delivery of progranulin; interaction occurs at the neuronal cell surface in a stressed nervous system. Interacts with PSAP; facilitates lysosomal delivery of progranulin from the extracellular space and the biosynthetic pathway. Forms a complex with PSAP and M6PR; PSAP bridges the binding between progranulin and M6PR. Forms a complex with PSAP and SORT1; progranulin bridges the interaction between PSAP and SORT1; facilitates lysosomal targeting of PSAP via SORT1; interaction enhances PSAP uptake in primary cortical neurons. Interacts (via regions corresponding to granulin-2 and granulin-7 peptides) with GBA1; this interaction prevents aggregation of GBA1-SCARB2 complex via interaction with HSPA1A upon stress. Interacts (via region corresponding to granulin-7 peptide) with HSPA1A; mediates recruitment of HSPA1A to GBA1 and prevents GBA1 aggregation in response to stress. Post-translationally, cleaved by ELANE; proteolysis is blocked by SLPI and is concentration- and time-dependent and induces CXCL8/IL-8 production; granulin-3 and granulin-4 are resistant to ELANE. Cleaved by CTSL in lysosome thus regulating the maturation and turnover of progranulin within the lysosome.

It localises to the secreted. The protein localises to the lysosome. Its function is as follows. Secreted protein that acts as a key regulator of lysosomal function and as a growth factor involved in inflammation, wound healing and cell proliferation. Regulates protein trafficking to lysosomes, and also the activity of lysosomal enzymes. Also facilitates the acidification of lysosomes, causing degradation of mature CTSD by CTSB. In addition, functions as a wound-related growth factor that acts directly on dermal fibroblasts and endothelial cells to promote division, migration and the formation of capillary-like tubule structures. Also promotes epithelial cell proliferation by blocking TNF-mediated neutrophil activation preventing release of oxidants and proteases. Moreover, modulates inflammation in neurons by preserving neurons survival, axonal outgrowth and neuronal integrity. Inhibits epithelial cell proliferation and induces epithelial cells to secrete IL-8. Functionally, stabilizes CTSD through interaction with CTSD leading to maintain its aspartic-type peptidase activity. The polypeptide is Progranulin (GRN) (Cavia porcellus (Guinea pig)).